The sequence spans 496 residues: Solute carrier family 2, facilitated glucose transporter member 3 (496 aa).

At 1-11 (MADKKKITASL) the chain is on the cytoplasmic side. The helical transmembrane segment at 12 to 33 (IYAVSVAAIGSLQFGYNTGVIN) threads the bilayer. Residues 34–65 (APEKIIQAFYNRTLSQRSGETISPELLTSLWS) lie on the Extracellular side of the membrane. A glycan (N-linked (GlcNAc...) asparagine) is linked at N44. The helical transmembrane segment at 66-86 (LSVAIFSVGGMIGSFSVSLFF) threads the bilayer. Over 87–91 (NRFGR) the chain is Cytoplasmic. The helical transmembrane segment at 92–112 (RNSMLLVNVLAFAGGALMALS) threads the bilayer. At 113 to 119 (KIAKAVE) the chain is on the extracellular side. Residues 120-143 (MLIIGRFIIGLFCGLCTGFVPMYI) traverse the membrane as a helical segment. The Cytoplasmic portion of the chain corresponds to 144–154 (SEVSPTSLRGA). Residues 155–175 (FGTLNQLGIVVGILVAQIFGL) form a helical membrane-spanning segment. Residue Q160 participates in D-glucose binding. The Extracellular segment spans residues 176-184 (EGIMGTEAL). The helical transmembrane segment at 185-205 (WPLLLGFTIVPAVLQCVALLF) threads the bilayer. Over 206-270 (CPESPRFLLI…LFRSPNYRQP (65 aa)) the chain is Cytoplasmic. A helical transmembrane segment spans residues 271–291 (IIISITLQLSQQLSGINAVFY). The interval 278–280 (QLS) is important for selectivity against fructose. D-glucose-binding positions include 281–282 (QQ) and N287. The Extracellular portion of the chain corresponds to 292 to 305 (YSTGIFERAGITQP). A helical transmembrane segment spans residues 306-326 (VYATIGAGVVNTVFTVVSLFL). N316 is a D-glucose binding site. Over 327–332 (VERAGR) the chain is Cytoplasmic. The helical transmembrane segment at 333 to 353 (RTLHLVGLGGMAVCAAVMTIA) threads the bilayer. Topologically, residues 354 to 362 (LALKEKWIR) are extracellular. The helical transmembrane segment at 363–388 (YISIVATFGFVALFEIGPGPIPWFIV) threads the bilayer. E377 and W385 together coordinate D-glucose. Over 389-398 (AELFSQGPRP) the chain is Cytoplasmic. The chain crosses the membrane as a helical span at residues 399 to 419 (AAMAVAGCSNWTSNFLVGMLF). The Extracellular portion of the chain corresponds to 420-428 (PYAEKLCGP). A helical membrane pass occupies residues 429-449 (YVFLIFLVFLLIFFIFTYFKV). The Cytoplasmic segment spans residues 450–496 (PETKGRTFEDISRGFEEQVETSSPSSPPIEKNPMVEMNSIEPDKEVA). Positions 464-496 (FEEQVETSSPSSPPIEKNPMVEMNSIEPDKEVA) are disordered.

The protein belongs to the major facilitator superfamily. Sugar transporter (TC 2.A.1.1) family. Glucose transporter subfamily.

The protein resides in the cell membrane. It localises to the perikaryon. It is found in the cell projection. It catalyses the reaction D-glucose(out) = D-glucose(in). The catalysed reaction is D-galactose(in) = D-galactose(out). Deoxyglucose transport is inhibited by D-glucose, D-galactose and maltose. Galactose transport is inhibited by D-glucose and maltose. In terms of biological role, facilitative glucose transporter. Can also mediate the uptake of various other monosaccharides across the cell membrane. Mediates the uptake of glucose, 2-deoxyglucose, galactose, mannose, xylose and fucose, and probably also dehydroascorbate. Does not mediate fructose transport. Required for mesendoderm differentiation. This chain is Solute carrier family 2, facilitated glucose transporter member 3, found in Gallus gallus (Chicken).